The sequence spans 335 residues: Ketol-acid reductoisomerase (NADP(+)) (335 aa).

Residues 5-185 form the KARI N-terminal Rossmann domain; the sequence is SKIYTDNDAN…GATRAGVIPT (181 aa). NADP(+) is bound by residues 28–31, serine 56, and 86–89; these read YGSQ and DMVQ. Histidine 111 is an active-site residue. Glycine 137 provides a ligand contact to NADP(+). The KARI C-terminal knotted domain maps to 186 to 331; the sequence is TFKEETETDL…NQLRDLVQKG (146 aa). Mg(2+) contacts are provided by aspartate 194, glutamate 198, glutamate 230, and glutamate 234. Serine 255 serves as a coordination point for substrate.

It belongs to the ketol-acid reductoisomerase family. It depends on Mg(2+) as a cofactor.

The catalysed reaction is (2R)-2,3-dihydroxy-3-methylbutanoate + NADP(+) = (2S)-2-acetolactate + NADPH + H(+). It carries out the reaction (2R,3R)-2,3-dihydroxy-3-methylpentanoate + NADP(+) = (S)-2-ethyl-2-hydroxy-3-oxobutanoate + NADPH + H(+). The protein operates within amino-acid biosynthesis; L-isoleucine biosynthesis; L-isoleucine from 2-oxobutanoate: step 2/4. It participates in amino-acid biosynthesis; L-valine biosynthesis; L-valine from pyruvate: step 2/4. Its function is as follows. Involved in the biosynthesis of branched-chain amino acids (BCAA). Catalyzes an alkyl-migration followed by a ketol-acid reduction of (S)-2-acetolactate (S2AL) to yield (R)-2,3-dihydroxy-isovalerate. In the isomerase reaction, S2AL is rearranged via a Mg-dependent methyl migration to produce 3-hydroxy-3-methyl-2-ketobutyrate (HMKB). In the reductase reaction, this 2-ketoacid undergoes a metal-dependent reduction by NADPH to yield (R)-2,3-dihydroxy-isovalerate. The chain is Ketol-acid reductoisomerase (NADP(+)) from Saccharolobus solfataricus (strain ATCC 35092 / DSM 1617 / JCM 11322 / P2) (Sulfolobus solfataricus).